Here is a 315-residue protein sequence, read N- to C-terminus: Protein sprouty homolog 2 (315 aa).

The segment covering 1–14 has biased composition (polar residues); it reads MEARAQSGSGSQPL. Disordered stretches follow at residues 1–38 and 51–140; these read MEAR…PQQV and NTNE…GSSF. The segment covering 20–32 has biased composition (basic and acidic residues); sequence DSGRQRGEPDPRD. Residues 88-100 show a composition bias toward pro residues; that stretch reads PRQPSRPQHPPAH. Over residues 109 to 140 the composition is skewed to low complexity; sequence RSISTVSSGSRSSTRTSTSSSSSEQRLLGSSF. The required for interaction with CAV1 stretch occupies residues 118–315; it reads SRSSTRTSTS…VPPRNFEKPT (198 aa). Positions 177–291 constitute an SPR domain; that stretch reads KCEDCGKCKC…CYDRVNRPGC (115 aa). Residues 178-315 form a required for interaction with TESK1 region; that stretch reads CEDCGKCKCK…VPPRNFEKPT (138 aa).

It belongs to the sprouty family. Forms heterodimers with SPRY1. Forms a tripartite complex containing GAB1, METTL13 and SPRY2. Within the complex interacts with METTL13. Interacts with RAF1. Interacts (via C-terminus) with TESK1 (via C-terminus); the interaction disrupts SPRY2 interaction with GRB2, potentially via disruption of SPRY2 serine dephosphorylation. Interacts with PPP2R1A/PP2A-A and PPP2CA/PP2A-C; the interaction with PPP2CA/PP2A-C is inhibited by interaction with TESK1, possibly by vesicular sequestration of SPRY2. Inhibition of the interaction with the serine/threonine-protein phosphatase 2A (PP2A) holoenzyme results in loss of PP2A-mediated dephosphorylation, resulting in the loss of SPRY2 interaction with GRB2. Interacts with GRB2. Interacts with CBL/C-CBL; the interaction inhibits CBL-mediated ubiquitination of EGFR. Interacts (via C-terminus) with CAV1 (via C-terminus). Cleaved at Pro-144 by the prolyl endopeptidase FAP (seprase) activity (in vitro).

It localises to the cytoplasm. Its subcellular location is the cytoskeleton. It is found in the cell projection. The protein localises to the ruffle membrane. Its function is as follows. Antagonist of fibroblast growth factor (FGF) pathways via inhibition of FGF-mediated phosphorylation of ERK1/2. Thereby acts as an antagonist of FGF-induced retinal lens fiber differentiation, may inhibit limb bud outgrowth and may negatively modulate respiratory organogenesis. Inhibits TGFB-induced epithelial-to-mesenchymal transition in retinal lens epithelial cells. Inhibits CBL/C-CBL-mediated EGFR ubiquitination. In Bos taurus (Bovine), this protein is Protein sprouty homolog 2 (SPRY2).